A 551-amino-acid chain; its full sequence is Probable aldehyde dehydrogenase (551 aa).

Residue 278 to 283 participates in NAD(+) binding; the sequence is GSSRVA. Catalysis depends on Glu-297, which acts as the Proton acceptor. Residue Cys-332 is the Nucleophile of the active site.

The protein belongs to the aldehyde dehydrogenase family. As to expression, in uninfected plants, highest levels found in stems. In plants infected with the flax rust, highest levels in leaves. Higher levels of expression in infected leaves than uninfected stems.

It catalyses the reaction an aldehyde + NAD(+) + H2O = a carboxylate + NADH + 2 H(+). Functionally, could be involved in facilitating the biotrophic relationship between the plant and the rust fungus. This Linum usitatissimum (Flax) protein is Probable aldehyde dehydrogenase (FIS1).